The following is a 444-amino-acid chain: Tryptophan 5-hydroxylase 1 (444 aa).

The ACT domain occupies 19-94; the sequence is TLIFSLKNEV…TVLSVDSPDQ (76 aa). Ser-58 carries the phosphoserine; by PKA modification. Residues Tyr-235, Arg-257, and Thr-265 each contribute to the L-tryptophan site. Residues His-272, His-277, and Glu-317 each contribute to the Fe cation site. Residues Ser-336 and Ile-366 each coordinate L-tryptophan.

It belongs to the biopterin-dependent aromatic amino acid hydroxylase family. As to quaternary structure, homotetramer. Interacts with DNAJC12. Fe(2+) serves as cofactor. In terms of processing, ubiquitinated, leading to its degradation by the proteasome. Ubiquitinated is triggered by phosphorylation. Post-translationally, phosphorylated; triggering degradation by the proteasome.

It carries out the reaction (6R)-L-erythro-5,6,7,8-tetrahydrobiopterin + L-tryptophan + O2 = 5-hydroxy-L-tryptophan + (4aS,6R)-4a-hydroxy-L-erythro-5,6,7,8-tetrahydrobiopterin. Its pathway is aromatic compound metabolism; serotonin biosynthesis; serotonin from L-tryptophan: step 1/2. Its function is as follows. Oxidizes L-tryptophan to 5-hydroxy-l-tryptophan in the rate-determining step of serotonin biosynthesis. This is Tryptophan 5-hydroxylase 1 (Tph1) from Rattus norvegicus (Rat).